We begin with the raw amino-acid sequence, 863 residues long: Dynamin-3 (863 aa).

Positions 28-294 (LLELPQIAVV…LTNHIRDTLP (267 aa)) constitute a Dynamin-type G domain. Residues 38–45 (GGQSAGKS) form a G1 motif region. 38–46 (GGQSAGKSS) serves as a coordination point for GTP. Residues 64 to 66 (VTR) are G2 motif. Residues 136–139 (DLPG) form a G3 motif region. The G4 motif stretch occupies residues 205-208 (TKLD). Residue 205–211 (TKLDLMD) coordinates GTP. Phosphotyrosine is present on Tyr231. A G5 motif region spans residues 235 to 238 (VNRS). 236–239 (NRSQ) serves as a coordination point for GTP. Lys299 is modified (N6-acetyllysine). Residues 515–621 (QVIRKGWLTV…WKASLLRAGV (107 aa)) form the PH domain. Tyr593 is modified (phosphotyrosine). Position 594 is an N6-acetyllysine (Lys594). Disordered regions lie at residues 626 to 647 (SVGSNKTENDENGQAENFSMDP) and 742 to 863 (ATVS…SLLD). Positions 627–642 (VGSNKTENDENGQAEN) are enriched in polar residues. Residues 653–744 (VETIRNLVDS…IIGDINTATV (92 aa)) enclose the GED domain. Ser763 and Ser767 each carry phosphoserine. Pro residues-rich tracts occupy residues 791–816 (PAIPSPGPHSGAPPVPFRPGPLPPFP) and 826–849 (PQVPSRPTRAPPSVPSRRPPPSPT). Ser847 is modified (phosphoserine).

It belongs to the TRAFAC class dynamin-like GTPase superfamily. Dynamin/Fzo/YdjA family.

Its subcellular location is the cytoplasm. The protein resides in the cytoskeleton. It carries out the reaction GTP + H2O = GDP + phosphate + H(+). Functionally, microtubule-associated force-producing protein involved in producing microtubule bundles and able to bind and hydrolyze GTP. Most probably involved in vesicular trafficking processes, in particular endocytosis. The protein is Dynamin-3 (Dnm3) of Mus musculus (Mouse).